Here is a 160-residue protein sequence, read N- to C-terminus: Putative UPF0479 protein YBL113W-A (160 aa).

Helical transmembrane passes span Ile39–Gln59 and Val136–His156.

It belongs to the UPF0479 family.

The protein localises to the membrane. The sequence is that of Putative UPF0479 protein YBL113W-A from Saccharomyces cerevisiae (strain ATCC 204508 / S288c) (Baker's yeast).